We begin with the raw amino-acid sequence, 502 residues long: Glycerol kinase (502 aa).

Thr-13 is an ADP binding site. Residues Thr-13, Thr-14, and Ser-15 each coordinate ATP. Thr-13 is a sn-glycerol 3-phosphate binding site. Residue Arg-17 participates in ADP binding. Positions 83, 84, 136, and 246 each coordinate sn-glycerol 3-phosphate. Glycerol is bound by residues Arg-83, Glu-84, Tyr-136, Asp-246, and Gln-247. ADP is bound by residues Thr-268 and Gly-311. Residues Thr-268, Gly-311, Gln-315, and Gly-412 each contribute to the ATP site. Residues Gly-412 and Asn-416 each contribute to the ADP site.

This sequence belongs to the FGGY kinase family.

The enzyme catalyses glycerol + ATP = sn-glycerol 3-phosphate + ADP + H(+). It participates in polyol metabolism; glycerol degradation via glycerol kinase pathway; sn-glycerol 3-phosphate from glycerol: step 1/1. Its activity is regulated as follows. Inhibited by fructose 1,6-bisphosphate (FBP). In terms of biological role, key enzyme in the regulation of glycerol uptake and metabolism. Catalyzes the phosphorylation of glycerol to yield sn-glycerol 3-phosphate. The polypeptide is Glycerol kinase (Francisella tularensis subsp. tularensis (strain FSC 198)).